The primary structure comprises 526 residues: Protein mono-ADP-ribosyltransferase PARP3 (526 aa).

A disordered region spans residues 1-55 (MAPKRRAPPASQPADGGKKAKGGQEEEEDAWSSALNALKTAPREKPPATIDGQCP). One can recognise a WGR domain in the interval 61-151 (DAKVYEDYDC…DNFVAQPGKY (91 aa)). In terms of domain architecture, PARP alpha-helical spans 183-301 (PCALDETTQK…DIEVAQSLQA (119 aa)). The PARP catalytic domain maps to 312 to 526 (HPLDRDYALL…RIRYLVQLHF (215 aa)).

It belongs to the ARTD/PARP family.

It localises to the nucleus. It is found in the chromosome. The protein localises to the cytoplasm. The protein resides in the cytoskeleton. Its subcellular location is the microtubule organizing center. It localises to the centrosome. It is found in the centriole. The enzyme catalyses L-aspartyl-[protein] + NAD(+) = 4-O-(ADP-D-ribosyl)-L-aspartyl-[protein] + nicotinamide. It catalyses the reaction L-glutamyl-[protein] + NAD(+) = 5-O-(ADP-D-ribosyl)-L-glutamyl-[protein] + nicotinamide. The catalysed reaction is L-lysyl-[protein] + NAD(+) = N(6)-(ADP-D-ribosyl)-L-lysyl-[protein] + nicotinamide + H(+). Its function is as follows. Mono-ADP-ribosyltransferase that mediates mono-ADP-ribosylation of target proteins and plays a key role in the response to DNA damage. Mediates mono-ADP-ribosylation of glutamate, aspartate or lysine residues on target proteins. In contrast to PARP1 and PARP2, it is not able to mediate poly-ADP-ribosylation. Involved in DNA repair by mediating mono-ADP-ribosylation of a limited number of acceptor proteins involved in chromatin architecture and in DNA metabolism, such as histone H2B, XRCC5 and XRCC6. ADP-ribosylation follows DNA damage and appears as an obligatory step in a detection/signaling pathway leading to the reparation of DNA strand breaks. Involved in single-strand break repair by catalyzing mono-ADP-ribosylation of histone H2B on 'Glu-2' (H2BE2ADPr) of nucleosomes containing nicked DNA. Cooperates with the XRCC5-XRCC6 (Ku80-Ku70) heterodimer to limit end-resection thereby promoting accurate NHEJ. Associates with a number of DNA repair factors and is involved in the response to exogenous and endogenous DNA strand breaks. Together with APLF, promotes the retention of the LIG4-XRCC4 complex on chromatin and accelerate DNA ligation during non-homologous end-joining (NHEJ). In addition to proteins, also able to ADP-ribosylate DNA: mediates DNA mono-ADP-ribosylation of DNA strand break termini via covalent addition of a single ADP-ribose moiety to a 5'- or 3'-terminal phosphate residues in DNA containing multiple strand breaks. This chain is Protein mono-ADP-ribosyltransferase PARP3, found in Gallus gallus (Chicken).